A 261-amino-acid chain; its full sequence is ATP synthase subunit a (261 aa).

5 helical membrane passes run 28–48 (AVHLDSLGWSVFLGLVFLTIF), 89–109 (IAPLSLTIFVWILLMNSMDWV), 140–160 (NITFGLALGVFILIIYYSIKV), 203–223 (LFGNLYAGELIFLLIATIGVF), and 229–249 (FLWAAFHLLVIPLQAFIFMML).

The protein belongs to the ATPase A chain family. As to quaternary structure, F-type ATPases have 2 components, CF(1) - the catalytic core - and CF(0) - the membrane proton channel. CF(1) has five subunits: alpha(3), beta(3), gamma(1), delta(1), epsilon(1). CF(0) has three main subunits: a(1), b(2) and c(9-12). The alpha and beta chains form an alternating ring which encloses part of the gamma chain. CF(1) is attached to CF(0) by a central stalk formed by the gamma and epsilon chains, while a peripheral stalk is formed by the delta and b chains.

It localises to the cell inner membrane. In terms of biological role, key component of the proton channel; it plays a direct role in the translocation of protons across the membrane. In Colwellia psychrerythraea (strain 34H / ATCC BAA-681) (Vibrio psychroerythus), this protein is ATP synthase subunit a.